The following is a 320-amino-acid chain: D-alanine--D-alanine ligase (320 aa).

Residues 104-308 (KRVCLSHGVP…YEDLCVEILR (205 aa)) enclose the ATP-grasp domain. ATP is bound at residue 134–189 (AAEFGMPLMLKAPHEGSTIGIAKVETAEGMQAGFDLCAKYDDVVLVEQFVKGRELT). Mg(2+)-binding residues include aspartate 261, glutamate 275, and asparagine 277.

Belongs to the D-alanine--D-alanine ligase family. It depends on Mg(2+) as a cofactor. Requires Mn(2+) as cofactor.

The protein resides in the cytoplasm. It catalyses the reaction 2 D-alanine + ATP = D-alanyl-D-alanine + ADP + phosphate + H(+). It functions in the pathway cell wall biogenesis; peptidoglycan biosynthesis. Its function is as follows. Cell wall formation. This is D-alanine--D-alanine ligase from Janthinobacterium sp. (strain Marseille) (Minibacterium massiliensis).